Reading from the N-terminus, the 443-residue chain is Protein king tubby (443 aa).

Disordered stretches follow at residues 57–80 and 98–191; these read TNGS…NNMR and HELE…EGDV. Over residues 67 to 80 the composition is skewed to polar residues; sequence VAMNTSRNHSNNMR. The segment covering 113 to 128 has biased composition (low complexity); it reads QQQQSASHSANSTQSQ. A Phosphoserine modification is found at serine 136. Over residues 177–186 the composition is skewed to gly residues; it reads NGTGNGTGGE.

It belongs to the TUB family.

It is found in the cytoplasm. The protein localises to the nucleus. The protein resides in the cell projection. Its subcellular location is the cilium membrane. It localises to the rhabdomere. The sequence is that of Protein king tubby from Drosophila sechellia (Fruit fly).